The sequence spans 301 residues: Aquaporin NIP2-3 (301 aa).

2 consecutive transmembrane segments (helical) span residues 57–77 (VISE…AASI) and 91–111 (SVAG…ISGA). The NPA 1 signature appears at 114-116 (NPA). 3 helical membrane-spanning segments follow: residues 132–154 (VPFY…KAVL), 172–192 (ALAI…AVAT), and 200–220 (LAGL…GPVS). The short motif at 225-227 (NPA) is the NPA 2 element. A helical transmembrane segment spans residues 238–258 (VFTGLWIYFLGPVVGTLSGAW).

The protein belongs to the MIP/aquaporin (TC 1.A.8) family. NIP (TC 1.A.8.12) subfamily.

The protein resides in the membrane. Its function is as follows. Aquaporins facilitate the transport of water and small neutral solutes across cell membranes. The protein is Aquaporin NIP2-3 (NIP2-3) of Zea mays (Maize).